The chain runs to 410 residues: Interstrand DNA cross-link repair glycosylase (410 aa).

The QXD; important for activity signature appears at 45–47 (QID).

The protein belongs to the DNA glycosylase AlkZ-like family.

Its function is as follows. DNA glycosylase involved in the repair of interstrand DNA cross-links (ICLs), which are highly toxic DNA lesions that covalently tether the opposing strands of DNA, thereby inhibiting essential cellular processes such as DNA replication and transcription. Acts by unhooking both sides of the ICLs, forming abasic (AP) sites on both strands. Unhooks ICLs derived from various cross-linking agents, including azinomycin B (AZB) and mechlorethamine, also known as nitrogen mustard (NM), protecting cells from the toxicity of these cross-linking agents. In vitro, also acts on monoadducts and can catalyze the excision of N7-methylguanine (7mGua) from an oligonucleotide containing N7-methyldeoxyguanosine (d7mG). Shows no unhooking activity toward FaPy-ICLs. The protein is Interstrand DNA cross-link repair glycosylase (ycaQ) of Escherichia coli (strain K12).